We begin with the raw amino-acid sequence, 394 residues long: DNA replication and repair protein RecF (394 aa).

30–37 (GRNGFGKT) contacts ATP.

The protein belongs to the RecF family.

The protein localises to the cytoplasm. Functionally, the RecF protein is involved in DNA metabolism; it is required for DNA replication and normal SOS inducibility. RecF binds preferentially to single-stranded, linear DNA. It also seems to bind ATP. In Corynebacterium glutamicum (strain R), this protein is DNA replication and repair protein RecF.